The following is a 235-amino-acid chain: MDIKVKDFEGPLDLLLHLVSKYEVDVYQVPIVEVIEQYLAYIETLQAMRLELAGEYMLMASQLMLIKSRRLLPKLVDKEPDEEDLEQELLGKIEEYSRFKALSQELASQHDKRALLFSKPKQELIFEQAVLQKDKTVMDLFLAFSQLMAAKQEAFKYNHTVIERDDYRIEDMMELIEARLELEQELTLTDLLKHCDHLNEAITLFLASLELIKRQLVGIEQTSHFGQIVLRKEIQ.

The protein belongs to the ScpA family. As to quaternary structure, component of a cohesin-like complex composed of ScpA, ScpB and the Smc homodimer, in which ScpA and ScpB bind to the head domain of Smc. The presence of the three proteins is required for the association of the complex with DNA.

The protein localises to the cytoplasm. In terms of biological role, participates in chromosomal partition during cell division. May act via the formation of a condensin-like complex containing Smc and ScpB that pull DNA away from mid-cell into both cell halves. This is Segregation and condensation protein A from Streptococcus equi subsp. equi (strain 4047).